The following is a 411-amino-acid chain: 2-acylphloroglucinol 4-prenyltransferase, chloroplastic (411 aa).

The transit peptide at 1 to 91 directs the protein to the chloroplast; it reads MELSSVSSFS…CNDQRGNSIR (91 aa). The next 8 helical transmembrane spans lie at 159-179, 198-218, 226-246, 253-273, 278-298, 333-353, 356-376, and 391-411; these read LLGM…NQIF, ISVE…FILI, LLTS…VPPF, ITAF…VYYA, LGLA…ITFM, LLGT…AIIW, AFKS…LIFQ, and KSFY…YLFI.

It belongs to the UbiA prenyltransferase family. Mg(2+) serves as cofactor. Expressed in glandular trichomes called lupulin glands, and in early stage and mature cones. Detected in leaves, but not in root, stem and first stage of flowers. No expression in male flowers.

Its subcellular location is the plastid. It localises to the chloroplast membrane. It carries out the reaction a 2-acylphloroglucinol + dimethylallyl diphosphate = a 2-acyl-4-prenylphloroglucinol + diphosphate. Its pathway is secondary metabolite biosynthesis. In terms of biological role, involved in the biosynthesis of prenylated phenolics natural products which contribute to the bitter taste of beer and display broad biological activities. Catalyzes the first prenylation step in the beta-bitter acid pathway. Abble to transfer dimethylallyl diphosphate (DMAPP) or geranyl diphosphate (GPP) to phlorisovalerophenone (PIVP), phlorisobutrylphenone (PIMP) and naringenin chalcone. Can also use phlorisobutyrophenone (PIBP) and phlormethylbutanophenone (PMBP) as substrates, but not 6'-O-methylated chalcone or naringenin. The protein is 2-acylphloroglucinol 4-prenyltransferase, chloroplastic of Humulus lupulus (European hop).